We begin with the raw amino-acid sequence, 605 residues long: DNA mismatch repair protein MutL (605 aa).

This sequence belongs to the DNA mismatch repair MutL/HexB family.

Its function is as follows. This protein is involved in the repair of mismatches in DNA. It is required for dam-dependent methyl-directed DNA mismatch repair. May act as a 'molecular matchmaker', a protein that promotes the formation of a stable complex between two or more DNA-binding proteins in an ATP-dependent manner without itself being part of a final effector complex. In Rhizobium meliloti (strain 1021) (Ensifer meliloti), this protein is DNA mismatch repair protein MutL.